The following is a 395-amino-acid chain: Protein phosphatase methylesterase 1 (395 aa).

Catalysis depends on residues serine 194, aspartate 222, and histidine 348.

This sequence belongs to the AB hydrolase superfamily.

The catalysed reaction is [phosphatase 2A protein]-C-terminal L-leucine methyl ester + H2O = [phosphatase 2A protein]-C-terminal L-leucine + methanol + H(+). Functionally, demethylates proteins that have been reversibly carboxymethylated. Demethylates the phosphatase PP2A catalytic subunit. The polypeptide is Protein phosphatase methylesterase 1 (PPE1) (Kluyveromyces lactis (strain ATCC 8585 / CBS 2359 / DSM 70799 / NBRC 1267 / NRRL Y-1140 / WM37) (Yeast)).